The chain runs to 109 residues: Flagellar hook-basal body complex protein FliE (109 aa).

The protein belongs to the FliE family.

The protein localises to the bacterial flagellum basal body. The polypeptide is Flagellar hook-basal body complex protein FliE (Stutzerimonas stutzeri (strain A1501) (Pseudomonas stutzeri)).